We begin with the raw amino-acid sequence, 32 residues long: Ranatuerin-2CSa (32 aa).

Cys27 and Cys32 are disulfide-bonded.

Expressed by the skin glands.

It localises to the secreted. The protein localises to the target cell membrane. Functionally, antibacterial peptide with amphipathic alpha-helical structure. Active against E.coli ATCC 25726 (MIC=4-5 uM) and S.aureus ATCC 25923 (MIC=8-10 uM). Has a weak hemolytic activity on human erythrocytes (LC(50)=150-160 uM). This is Ranatuerin-2CSa from Rana cascadae (Cascades frog).